The chain runs to 211 residues: Arginine exporter protein ArgO (211 aa).

The next 6 helical transmembrane spans lie at 1 to 21 (MISY…PLGP), 37 to 57 (LMIA…GIFG), 68 to 88 (LLAL…FGAL), 111 to 131 (IIAT…DTFV), 147 to 167 (WFAL…ALLA), and 179 to 199 (AQRI…FQLA).

This sequence belongs to the LysE/ArgO transporter (TC 2.A.75) family.

Its subcellular location is the cell inner membrane. The catalysed reaction is L-arginine(in) = L-arginine(out). Its function is as follows. Involved in the export of arginine. Important to control the intracellular level of arginine and the correct balance between arginine and lysine. The polypeptide is Arginine exporter protein ArgO (Salmonella newport (strain SL254)).